The sequence spans 159 residues: MIAIYPGRFDPVTLGHLSVARRASGFCDRLIIAVFDNPAKPGLFTAAERVDFIKQSIKDFPNVEVRSFSGLMVNFARKMGASLIIRGLRVGADFEREMEMYVMNRRLDEGIELCCLFSEPQYQYLSASLIKEIVILGGDSSGLISEHVAVALKNKLASV.

His16 serves as a coordination point for ATP. Residues Lys40, Met72, and Arg86 each coordinate substrate. ATP contacts are provided by residues 87–89 (GLR), Glu97, and 122–128 (YQYLSAS).

It belongs to the bacterial CoaD family. As to quaternary structure, homohexamer. The cofactor is Mg(2+).

It is found in the cytoplasm. The enzyme catalyses (R)-4'-phosphopantetheine + ATP + H(+) = 3'-dephospho-CoA + diphosphate. It participates in cofactor biosynthesis; coenzyme A biosynthesis; CoA from (R)-pantothenate: step 4/5. Reversibly transfers an adenylyl group from ATP to 4'-phosphopantetheine, yielding dephospho-CoA (dPCoA) and pyrophosphate. In Dehalococcoides mccartyi (strain CBDB1), this protein is Phosphopantetheine adenylyltransferase.